Reading from the N-terminus, the 258-residue chain is Aquaglyceroporin (258 aa).

At 1–11 (MHMLFYKSYVR) the chain is on the cytoplasmic side. A helical membrane pass occupies residues 12–32 (EFIGEFLGTFVLMFLGEGATA). The Extracellular segment spans residues 33-45 (NFHTTGLSGDWYK). A helical transmembrane segment spans residues 46 to 66 (LCLGWGLAVFFGILVSAKLSG). Positions 66, 67, and 70 each coordinate glycerol. Residues 67–87 (AHLNLAVSIGLSSINKFDLKK) are Cytoplasmic-facing. A helical transmembrane segment spans residues 88-108 (IPVYFFAQLLGAFVGTSTVYG). Residues 109 to 135 (LYHGFISNSKIPQFAWETSRNPSISLT) lie on the Extracellular side of the membrane. S127 is a glycerol binding site. The chain crosses the membrane as a helical span at residues 136-156 (GAFFNELILTGILLLVILVVV). At 157–171 (DENICGKFHILKLSS) the chain is on the cytoplasmic side. The helical transmembrane segment at 172 to 192 (VVGLIILCIGITFGGNTGFAL) threads the bilayer. The glycerol site is built by G189, F190, N193, and R196. Topologically, residues 193–217 (NPSRDLGSRFLSLIAYGKDTFTKDN) are extracellular. Residues 218–238 (FYFWVPLVAPCVGSVVFCQFY) form a helical membrane-spanning segment. Topologically, residues 239 to 258 (DKVICPLVDLANNEKDGVDL) are cytoplasmic.

It belongs to the MIP/aquaporin (TC 1.A.8) family. In terms of assembly, homotetramer.

The protein resides in the cell membrane. It carries out the reaction H2O(in) = H2O(out). The enzyme catalyses glycerol(in) = glycerol(out). It catalyses the reaction urea(in) = urea(out). The catalysed reaction is NH4(+)(in) = NH4(+)(out). It carries out the reaction methylamine(out) = methylamine(in). The enzyme catalyses formamide(out) = formamide(in). Functionally, mediates water and glycerol transport across the cell membrane. Permeable to sugar alcohols of up to five carbons and urea. Permeable to ammonia, methylamine and formamide. The sequence is that of Aquaglyceroporin from Plasmodium falciparum (isolate 3D7).